We begin with the raw amino-acid sequence, 118 residues long: MVTCLTTFAVLLLTAAVASAAEAAAPGGESYVKAIFAVGAMIGAGIAIGVGAVGAGLGIGTAASGACQAVGRNPGVQGKIMMTMLVGMAMAESIAIYALVVSLVLIFANPYTKFFFVG.

Helical transmembrane passes span 34-54 (AIFA…GAVG) and 88-108 (MAMA…LIFA).

Belongs to the ATPase C chain family. As to quaternary structure, F-type ATPases have 2 components, F(1) - the catalytic core - and F(0) - the membrane proton channel. F(1) has five subunits: alpha(3), beta(3), gamma(1), delta(1), epsilon(1). F(0) has three main subunits: a(1), b(2) and c(10-14). The alpha and beta chains form an alternating ring which encloses part of the gamma chain. F(1) is attached to F(0) by a central stalk formed by the gamma and epsilon chains, while a peripheral stalk is formed by the delta and b chains.

It is found in the cell inner membrane. Its function is as follows. F(1)F(0) ATP synthase produces ATP from ADP in the presence of a proton or sodium gradient. F-type ATPases consist of two structural domains, F(1) containing the extramembraneous catalytic core and F(0) containing the membrane proton channel, linked together by a central stalk and a peripheral stalk. During catalysis, ATP synthesis in the catalytic domain of F(1) is coupled via a rotary mechanism of the central stalk subunits to proton translocation. Key component of the F(0) channel; it plays a direct role in translocation across the membrane. A homomeric c-ring of between 10-14 subunits forms the central stalk rotor element with the F(1) delta and epsilon subunits. The polypeptide is ATP synthase subunit c (Syntrophus aciditrophicus (strain SB)).